The following is a 633-amino-acid chain: Threonine--tRNA ligase (633 aa).

The interval 1 to 143 (MRALFLHSNR…SRTIKPKKVK (143 aa)) is editing domain. 2 catalytic regions span residues 220–515 (NPLN…PVLP) and 221–515 (PLND…PVLP). 3 residues coordinate Zn(2+): Cys314, His365, and His488.

Belongs to the class-II aminoacyl-tRNA synthetase family. Homodimer. It depends on Zn(2+) as a cofactor.

The protein localises to the cytoplasm. It catalyses the reaction tRNA(Thr) + L-threonine + ATP = L-threonyl-tRNA(Thr) + AMP + diphosphate + H(+). In terms of biological role, catalyzes the attachment of threonine to tRNA(Thr) in a two-step reaction: L-threonine is first activated by ATP to form Thr-AMP and then transferred to the acceptor end of tRNA(Thr). Also edits incorrectly charged L-seryl-tRNA(Thr). This chain is Threonine--tRNA ligase, found in Nanoarchaeum equitans (strain Kin4-M).